The chain runs to 502 residues: T-complex protein 11-like X-linked protein 2 (502 aa).

The interval 1–36 is disordered; the sequence is MPKTEETVLQNDPSVAENGAPEPKTPGQSQKSKSFC.

It belongs to the TCP11 family.

The chain is T-complex protein 11-like X-linked protein 2 from Homo sapiens (Human).